A 556-amino-acid chain; its full sequence is Delta-1-pyrroline-5-carboxylate dehydrogenase 12A1, mitochondrial (556 aa).

282–287 serves as a coordination point for NAD(+); that stretch reads GSSRVA. The Proton acceptor role is filled by Glu-301. Catalysis depends on Cys-336, which acts as the Nucleophile.

Belongs to the aldehyde dehydrogenase family. In terms of tissue distribution, highly expressed in flowers. Constitutively expressed at low levels in the other tissues. Highly expressed in pollen grains and tissues undergoing cell death. Expressed in old leaves, mature siliques and developing embryos.

It is found in the mitochondrion matrix. The catalysed reaction is (S)-1-pyrroline-5-carboxylate + NAD(+) + 2 H2O = L-glutamate + NADH + H(+). It functions in the pathway amino-acid degradation; L-proline degradation into L-glutamate; L-glutamate from L-proline: step 2/2. Plays a role in the inhibition of programmed cell death by converting the toxic proline catabolism intermediate (s)-1-pyrroline-5-carboxylate (P5C) to glutamate. This chain is Delta-1-pyrroline-5-carboxylate dehydrogenase 12A1, mitochondrial, found in Arabidopsis thaliana (Mouse-ear cress).